We begin with the raw amino-acid sequence, 78 residues long: Acyl carrier protein (78 aa).

Residues 1 to 76 (MAIHPKVKDI…DVASYLEKKG (76 aa)) enclose the Carrier domain. An O-(pantetheine 4'-phosphoryl)serine modification is found at Ser36.

This sequence belongs to the acyl carrier protein (ACP) family. Post-translationally, 4'-phosphopantetheine is transferred from CoA to a specific serine of apo-ACP by AcpS. This modification is essential for activity because fatty acids are bound in thioester linkage to the sulfhydryl of the prosthetic group.

It is found in the cytoplasm. The protein operates within lipid metabolism; fatty acid biosynthesis. Its function is as follows. Carrier of the growing fatty acid chain in fatty acid biosynthesis. The sequence is that of Acyl carrier protein from Bdellovibrio bacteriovorus (strain ATCC 15356 / DSM 50701 / NCIMB 9529 / HD100).